The primary structure comprises 2198 residues: RNA-directed RNA polymerase L (2198 aa).

The segment at 26-284 is endonuclease; it reads KEALLSQVEV…AHSDSLAPEC (259 aa). Residues E51, D89, and E102 each coordinate Mn(2+). Residue K115 is part of the active site. Positions 1161–1359 constitute a RdRp catalytic domain; sequence CDMKMAVNNG…FLSSKFNKFV (199 aa). D1319 lines the Mg(2+) pocket.

Belongs to the Bunyavirales RNA polymerase family. Homomultimer; the oligomeric structure is essential for the polymerase activity. Interacts with nucleoprotein N. Interacts with protein Z; this interaction inhibits viral transcription and replication, Z partially blocks the product exit tunnel for the releasing nascent RNA product. Mn(2+) is required as a cofactor. The cofactor is Mg(2+).

The protein localises to the virion. It is found in the host cytoplasm. The enzyme catalyses RNA(n) + a ribonucleoside 5'-triphosphate = RNA(n+1) + diphosphate. Its function is as follows. RNA-dependent RNA polymerase, which is responsible for the replication and transcription of the viral RNA genome using antigenomic RNA as an intermediate. During transcription, synthesizes subgenomic RNAs and assures their capping by a cap-snatching mechanism, which involves the endonuclease activity cleaving the host capped pre-mRNAs. These short capped RNAs are then used as primers for viral transcription. The 3'-end of subgenomic mRNAs molecules are heterogeneous and not polyadenylated. The replicase function is to direct synthesis of antigenomic and genomic RNA which are encapsidated and non capped. As a consequence of the use of the same enzyme for both transcription and replication, these mechanisms need to be well coordinated. These processes may be regulated by proteins N and Z in a dose-dependent manner. Z protein inhibits the viral polymerase L und thus the viral transcription and RNA synthesis. In Homo sapiens (Human), this protein is RNA-directed RNA polymerase L.